Here is a 659-residue protein sequence, read N- to C-terminus: Heparin-sulfate lyase (659 aa).

The first 24 residues, 1 to 24 (MTTKIFKRIIVFAVIALSSGNILA), serve as a signal peptide directing secretion. Catalysis depends on tyrosine 294, which acts as the Proton acceptor.

Belongs to the polysaccharide lyase 12 family.

The protein localises to the periplasm. It catalyses the reaction Elimination of sulfate, appears to act on linkages between N-acetyl-D-glucosamine and uronate. Product is an unsaturated sugar.. Functionally, specifically cleaves heparan sulfate-rich regions of acidic polysaccharides. Does not act on N,O-desulfated glucosamine or N-acetyl-O-sulfated glucosamine linkages. Functions in cleaving metazoan heparan sulfate and providing carbon, nitrogen and sulfate sources for microorganisms. The polypeptide is Heparin-sulfate lyase (hepC) (Pedobacter heparinus (strain ATCC 13125 / DSM 2366 / CIP 104194 / JCM 7457 / NBRC 12017 / NCIMB 9290 / NRRL B-14731 / HIM 762-3)).